Consider the following 240-residue polypeptide: Uridylate kinase (240 aa).

ATP is bound at residue 13–16; the sequence is KFSG. G55 is a binding site for UMP. ATP contacts are provided by G56 and R60. Residues D76 and 137 to 144 contribute to the UMP site; that span reads TGNPFFTT. The ATP site is built by T164, Y170, and D173.

This sequence belongs to the UMP kinase family. Homohexamer.

Its subcellular location is the cytoplasm. It carries out the reaction UMP + ATP = UDP + ADP. The protein operates within pyrimidine metabolism; CTP biosynthesis via de novo pathway; UDP from UMP (UMPK route): step 1/1. With respect to regulation, inhibited by UTP. Its function is as follows. Catalyzes the reversible phosphorylation of UMP to UDP. The chain is Uridylate kinase from Helicobacter pylori (strain J99 / ATCC 700824) (Campylobacter pylori J99).